Reading from the N-terminus, the 276-residue chain is Large ribosomal subunit protein uL2 (276 aa).

Positions 223-276 (GSAMNPVDHPHGGGEGKAPIGHPGPLTPWGKPTLGYKTRKKNKPSDKFIVKRRK) are disordered. A compositionally biased stretch (basic and acidic residues) spans 265-276 (KPSDKFIVKRRK).

The protein belongs to the universal ribosomal protein uL2 family. Part of the 50S ribosomal subunit. Forms a bridge to the 30S subunit in the 70S ribosome.

Functionally, one of the primary rRNA binding proteins. Required for association of the 30S and 50S subunits to form the 70S ribosome, for tRNA binding and peptide bond formation. It has been suggested to have peptidyltransferase activity; this is somewhat controversial. Makes several contacts with the 16S rRNA in the 70S ribosome. This is Large ribosomal subunit protein uL2 from Caldicellulosiruptor saccharolyticus (strain ATCC 43494 / DSM 8903 / Tp8T 6331).